Consider the following 372-residue polypeptide: UDP-N-acetylglucosamine--N-acetylmuramyl-(pentapeptide) pyrophosphoryl-undecaprenol N-acetylglucosamine transferase (372 aa).

UDP-N-acetyl-alpha-D-glucosamine contacts are provided by residues 21–23 (TAG), Asn135, Arg172, Ser206, and Gln303.

The protein belongs to the glycosyltransferase 28 family. MurG subfamily.

The protein localises to the cell membrane. The enzyme catalyses di-trans,octa-cis-undecaprenyl diphospho-N-acetyl-alpha-D-muramoyl-L-alanyl-D-glutamyl-meso-2,6-diaminopimeloyl-D-alanyl-D-alanine + UDP-N-acetyl-alpha-D-glucosamine = di-trans,octa-cis-undecaprenyl diphospho-[N-acetyl-alpha-D-glucosaminyl-(1-&gt;4)]-N-acetyl-alpha-D-muramoyl-L-alanyl-D-glutamyl-meso-2,6-diaminopimeloyl-D-alanyl-D-alanine + UDP + H(+). It functions in the pathway cell wall biogenesis; peptidoglycan biosynthesis. Cell wall formation. Catalyzes the transfer of a GlcNAc subunit on undecaprenyl-pyrophosphoryl-MurNAc-pentapeptide (lipid intermediate I) to form undecaprenyl-pyrophosphoryl-MurNAc-(pentapeptide)GlcNAc (lipid intermediate II). The chain is UDP-N-acetylglucosamine--N-acetylmuramyl-(pentapeptide) pyrophosphoryl-undecaprenol N-acetylglucosamine transferase from Paenarthrobacter aurescens (strain TC1).